A 127-amino-acid chain; its full sequence is UPF0102 protein SYNAS_23220 (127 aa).

The protein belongs to the UPF0102 family.

The protein is UPF0102 protein SYNAS_23220 of Syntrophus aciditrophicus (strain SB).